Here is a 265-residue protein sequence, read N- to C-terminus: Mlc titration factor A (265 aa).

Zn(2+)-binding residues include His111, His148, His152, and Glu211.

It belongs to the MtfA family. Interacts with Mlc. It depends on Zn(2+) as a cofactor.

The protein localises to the cytoplasm. Its function is as follows. Involved in the modulation of the activity of the glucose-phosphotransferase system (glucose-PTS). Interacts with the transcriptional repressor Mlc, preventing its interaction with DNA and leading to the modulation of expression of genes regulated by Mlc, including ptsG, which encodes the PTS system glucose-specific EIICB component. In terms of biological role, shows zinc-dependent metallopeptidase activity. In Salmonella paratyphi A (strain AKU_12601), this protein is Mlc titration factor A.